The primary structure comprises 435 residues: Glutamate-1-semialdehyde 2,1-aminomutase (435 aa).

At Lys-269 the chain carries N6-(pyridoxal phosphate)lysine.

This sequence belongs to the class-III pyridoxal-phosphate-dependent aminotransferase family. HemL subfamily. In terms of assembly, homodimer. Pyridoxal 5'-phosphate is required as a cofactor.

It localises to the cytoplasm. The catalysed reaction is (S)-4-amino-5-oxopentanoate = 5-aminolevulinate. It functions in the pathway porphyrin-containing compound metabolism; protoporphyrin-IX biosynthesis; 5-aminolevulinate from L-glutamyl-tRNA(Glu): step 2/2. This chain is Glutamate-1-semialdehyde 2,1-aminomutase, found in Gemmatimonas aurantiaca (strain DSM 14586 / JCM 11422 / NBRC 100505 / T-27).